The sequence spans 500 residues: NADH-quinone oxidoreductase subunit N (500 aa).

The next 14 helical transmembrane spans lie at 13-33, 42-62, 79-99, 111-131, 133-153, 168-188, 211-231, 245-265, 281-301, 321-341, 342-362, 386-406, 424-444, and 461-481; these read VMMPEFIILGVAVALSLIDLF, LLGLFAFVGIAVSFVSLLSLW, FAKSFKALLLIGSALVLLLSI, GEFYYLFLTALLGAMMMASSG, LITLFVGLELLSISSYILVAI, VITGSIATAITLFGMSYIFGF, YVLSLAFLLTFVGLSFKLASA, TTPVVSFLSVVSKTAGFVIVL, ASMLMTFAPYIAFLSGATMII, VAHAGYVLVAFASLSMFMFEA, IWFYLLAYVFMTIGAFAILQV, AIAMTIFLLSLAGIPGTAGFI, VLASIMVITTIISYVYYFGIF, and PPGVIAVVVICVIGTVLLGVF.

The protein belongs to the complex I subunit 2 family. NDH-1 is composed of 14 different subunits. Subunits NuoA, H, J, K, L, M, N constitute the membrane sector of the complex.

The protein localises to the cell membrane. The catalysed reaction is a quinone + NADH + 5 H(+)(in) = a quinol + NAD(+) + 4 H(+)(out). Its function is as follows. NDH-1 shuttles electrons from NADH, via FMN and iron-sulfur (Fe-S) centers, to quinones in the respiratory chain. The immediate electron acceptor for the enzyme in this species is believed to be a menaquinone. Couples the redox reaction to proton translocation (for every two electrons transferred, four hydrogen ions are translocated across the cytoplasmic membrane), and thus conserves the redox energy in a proton gradient. The protein is NADH-quinone oxidoreductase subunit N of Anoxybacillus flavithermus (strain DSM 21510 / WK1).